A 412-amino-acid polypeptide reads, in one-letter code: Major facilitator superfamily domain-containing protein 3 (412 aa).

12 consecutive transmembrane segments (helical) span residues 10–30 (GLYLVQGLPYGLQSGLLPVLL), 40–60 (VGLAKVLYAPWLLKLAWAPLV), 73–93 (STAGLGLVCGLLAGLPPPGAG), 94–114 (QAGLPAAVAGLLLLLNLGAAM), 138–158 (VQVVAYKLGAALAGGALLALL), 166–186 (LFLLLAATYWLAAALAWAAPA), 209–229 (VLAVPGTVWTAGFVLTYKLGE), 250–270 (LGLWNGVGAVVCSIAGSSLGG), 291–311 (LGGLACQTALVFHLDTLGASM), 321–341 (ALLSLCLQHFLGGLVTTVTFT), 361–381 (LLATLELLGKLLLGTLAGGLA), and 384–404 (LGPHPCFLLLLILSAFPVLYL).

The protein belongs to the major facilitator superfamily.

The protein localises to the membrane. In Homo sapiens (Human), this protein is Major facilitator superfamily domain-containing protein 3 (MFSD3).